The sequence spans 238 residues: CD63 antigen (238 aa).

Residues 2-11 (AVEGGMKCVK) lie on the Cytoplasmic side of the membrane. The helical transmembrane segment at 12–32 (FLLYVLLLAFCACAVGLIAVG) threads the bilayer. At 33 to 51 (VGAQLVLSQTIIQGATPGS) the chain is on the extracellular side. A helical transmembrane segment spans residues 52-72 (LLPVVIIAVGVFLFLVAFVGC). At 73–81 (CGACKENYC) the chain is on the cytoplasmic side. The chain crosses the membrane as a helical span at residues 82–102 (LMITFAIFLSLIMLVEVAAAI). At 103 to 203 (AGYVFRDKVM…KIGGWLRKNV (101 aa)) the chain is on the extracellular side. 3 N-linked (GlcNAc...) asparagine glycosylation sites follow: N130, N150, and N172. A helical membrane pass occupies residues 204–224 (LVVAAAALGIAFVEVLGIVFA). Residues 225 to 238 (CCLVKSIRSGYEVM) lie on the Cytoplasmic side of the membrane. Residues 234–238 (GYEVM) carry the Lysosomal targeting motif motif.

The protein belongs to the tetraspanin (TM4SF) family. In terms of assembly, interacts with TIMP1 and ITGB1 and recruits TIMP1 to ITGB1. Interacts with CD9. Identified in a complex with CD9 and ITGB3. Interacts with PMEL. Interacts with KDR/VEGFR2; identified in a complex with ITGB1 and KDR/VEGFR2 and is required to recruit KDR to ITGB1 complexes. Interacts with SYT7. Post-translationally, palmitoylated at a low, basal level in unstimulated platelets. The level of palmitoylation increases when platelets are activated by thrombin (in vitro). As to expression, detected in platelets (at protein level). Dysplastic nevi, radial growth phase primary melanomas, hematopoietic cells, tissue macrophages.

It is found in the cell membrane. It localises to the lysosome membrane. Its subcellular location is the late endosome membrane. The protein resides in the endosome. The protein localises to the multivesicular body. It is found in the melanosome. It localises to the secreted. Its subcellular location is the extracellular exosome. The protein resides in the cell surface. Its function is as follows. Functions as a cell surface receptor for TIMP1 and plays a role in the activation of cellular signaling cascades. Plays a role in the activation of ITGB1 and integrin signaling, leading to the activation of AKT, FAK/PTK2 and MAP kinases. Promotes cell survival, reorganization of the actin cytoskeleton, cell adhesion, spreading and migration, via its role in the activation of AKT and FAK/PTK2. Plays a role in VEGFA signaling via its role in regulating the internalization of KDR/VEGFR2. Plays a role in intracellular vesicular transport processes, and is required for normal trafficking of the PMEL luminal domain that is essential for the development and maturation of melanocytes. Plays a role in the adhesion of leukocytes onto endothelial cells via its role in the regulation of SELP trafficking. May play a role in mast cell degranulation in response to Ms4a2/FceRI stimulation, but not in mast cell degranulation in response to other stimuli. The protein is CD63 antigen (CD63) of Homo sapiens (Human).